A 185-amino-acid chain; its full sequence is Elongation factor P (185 aa).

The protein belongs to the elongation factor P family.

Its subcellular location is the cytoplasm. It functions in the pathway protein biosynthesis; polypeptide chain elongation. Involved in peptide bond synthesis. Stimulates efficient translation and peptide-bond synthesis on native or reconstituted 70S ribosomes in vitro. Probably functions indirectly by altering the affinity of the ribosome for aminoacyl-tRNA, thus increasing their reactivity as acceptors for peptidyl transferase. The polypeptide is Elongation factor P (Salinispora arenicola (strain CNS-205)).